Here is a 761-residue protein sequence, read N- to C-terminus: Wall-associated receptor kinase-like 4 (761 aa).

Positions 1 to 26 are cleaved as a signal peptide; it reads MKKETQNLQCIPLVISVLSLFGVSSA. Residues 27–349 are Extracellular-facing; sequence RKPPYLCNRV…EPKKPGQIKP (323 aa). 5 N-linked (GlcNAc...) asparagine glycosylation sites follow: N64, N166, N206, N226, and N262. Residues 278-339 form an atypical EGF-like region; that stretch reads CVCSYGYFSG…CVNKPGWFTC (62 aa). Cystine bridges form between C280–C293, C316–C330, and C325–C339. A helical membrane pass occupies residues 350–370; sequence VFQGVLIGSALLLFAFGIFGL. Residues 371–761 lie on the Cytoplasmic side of the membrane; sequence YKFIKKQRRS…VEPLVPLRTW (391 aa). The 274-residue stretch at 424–697 folds into the Protein kinase domain; it reads FNTNRVLGQG…REVSVELERI (274 aa). Residues 430–438 and K452 contribute to the ATP site; that span reads LGQGGQGTV. Y497 carries the phosphotyrosine modification. D549 serves as the catalytic Proton acceptor. Phosphothreonine occurs at positions 583 and 588. The residue at position 596 (Y596) is a Phosphotyrosine. A disordered region spans residues 701-761; that stretch reads SYKSEIHNDD…VEPLVPLRTW (61 aa). The span at 708–732 shows a compositional bias: acidic residues; the sequence is NDDDDDDDDDDEDDQAMELNIEETW.

The protein belongs to the protein kinase superfamily. Ser/Thr protein kinase family. Expressed in the whole plant. Detected in root-shoot junctions and lateral root initiation sites.

The protein localises to the membrane. The enzyme catalyses L-seryl-[protein] + ATP = O-phospho-L-seryl-[protein] + ADP + H(+). It catalyses the reaction L-threonyl-[protein] + ATP = O-phospho-L-threonyl-[protein] + ADP + H(+). Serine/threonine-protein kinase that may function as a signaling receptor of extracellular matrix component. Plays a role in plant mineral nutrients response. The protein is Wall-associated receptor kinase-like 4 (WAKL4) of Arabidopsis thaliana (Mouse-ear cress).